We begin with the raw amino-acid sequence, 376 residues long: Succinyl-diaminopimelate desuccinylase (376 aa).

His67 serves as a coordination point for Zn(2+). The active site involves Asp69. Asp100 is a binding site for Zn(2+). The Proton acceptor role is filled by Glu134. Residues Glu135, Glu163, and His349 each coordinate Zn(2+).

Belongs to the peptidase M20A family. DapE subfamily. In terms of assembly, homodimer. Requires Zn(2+) as cofactor. Co(2+) serves as cofactor.

The catalysed reaction is N-succinyl-(2S,6S)-2,6-diaminopimelate + H2O = (2S,6S)-2,6-diaminopimelate + succinate. Its pathway is amino-acid biosynthesis; L-lysine biosynthesis via DAP pathway; LL-2,6-diaminopimelate from (S)-tetrahydrodipicolinate (succinylase route): step 3/3. Catalyzes the hydrolysis of N-succinyl-L,L-diaminopimelic acid (SDAP), forming succinate and LL-2,6-diaminopimelate (DAP), an intermediate involved in the bacterial biosynthesis of lysine and meso-diaminopimelic acid, an essential component of bacterial cell walls. The polypeptide is Succinyl-diaminopimelate desuccinylase (Actinobacillus succinogenes (strain ATCC 55618 / DSM 22257 / CCUG 43843 / 130Z)).